We begin with the raw amino-acid sequence, 334 residues long: MSGFYHKHFLKLLDFTPAELNSLLQLAAKLKADKKSGKEEAKLTGKNIALIFEKDSTRTRCSFEVAAYDQGARVTYLGPSGSQIGHKESIKDTARVLGRMYDGIQYRGYGQEIVETLAEYAGVPVWNGLTNEFHPTQLLADLLTMQEHLPGKAFNEMTLVYAGDARNNMGNSMLEAAALTGLGLRLVAPQACWPEAALVTECRALAQQNGGNITLTEDVAQGVEGADFIYTDVWVSMGEAKEKWAERIALLRDYQVNNKMMQLTGNPEVKFLHCLPAFHDDQTTLGKKMAEEFGLHGGMEVTDEVFESAASIVFDQAENRMHTIKAVMVATLSK.

Residues 56-59, glutamine 83, arginine 107, and 134-137 contribute to the carbamoyl phosphate site; these read STRT and HPTQ. Residues asparagine 168, aspartate 232, and 236–237 each bind L-ornithine; that span reads SM. Carbamoyl phosphate-binding positions include 274–275 and arginine 320; that span reads CL.

Belongs to the aspartate/ornithine carbamoyltransferase superfamily. OTCase family.

Its subcellular location is the cytoplasm. The catalysed reaction is carbamoyl phosphate + L-ornithine = L-citrulline + phosphate + H(+). The protein operates within amino-acid biosynthesis; L-arginine biosynthesis; L-arginine from L-ornithine and carbamoyl phosphate: step 1/3. Reversibly catalyzes the transfer of the carbamoyl group from carbamoyl phosphate (CP) to the N(epsilon) atom of ornithine (ORN) to produce L-citrulline. This chain is Ornithine carbamoyltransferase, found in Shigella dysenteriae serotype 1 (strain Sd197).